A 301-amino-acid polypeptide reads, in one-letter code: uncharacterized protein (301 aa).

Over residues 16 to 28 (EITEESEKTKTDL) the composition is skewed to basic and acidic residues. The interval 16 to 38 (EITEESEKTKTDLQKANTPNKTE) is disordered. The segment covering 29–38 (QKANTPNKTE) has biased composition (polar residues). The 50-residue stretch at 252–301 (KENVALKMLQRCGWKEGQGLGQHNQGIINPLHVEISGFVTETKHSKINDK) folds into the G-patch domain.

This is an uncharacterized protein from Schizosaccharomyces pombe (strain 972 / ATCC 24843) (Fission yeast).